Consider the following 488-residue polypeptide: Histone deacetylase 2 (488 aa).

The segment at 9 to 322 (KKKVCYYYDG…WTYETAVALD (314 aa)) is histone deacetylase. The 1D-myo-inositol 1,4,5,6-tetrakisphosphate site is built by G28 and K32. H142 is an active-site residue. The Zn(2+) site is built by D177, H179, and D265. R271 serves as a coordination point for 1D-myo-inositol 1,4,5,6-tetrakisphosphate. A disordered region spans residues 389-488 (AVHEDSGDED…GAKSEQLSNP (100 aa)). The span at 402 to 417 (PDKRISIRASDKRIAC) shows a compositional bias: basic and acidic residues. Residues 418–428 (DEEFSDSEDEG) show a composition bias toward acidic residues. The span at 429–481 (EGGRRNVADHKKGAKKARIEEDKKETEDKKADVKEEDKSKDNSGEKTDTKGAK) shows a compositional bias: basic and acidic residues.

Belongs to the histone deacetylase family. HD type 1 subfamily. The cofactor is Zn(2+).

Its subcellular location is the nucleus. The protein localises to the cytoplasm. The catalysed reaction is N(6)-acetyl-L-lysyl-[histone] + H2O = L-lysyl-[histone] + acetate. It carries out the reaction N(6)-acetyl-L-lysyl-[protein] + H2O = L-lysyl-[protein] + acetate. The enzyme catalyses N(6)-(2E)-butenoyl-L-lysyl-[protein] + H2O = (2E)-2-butenoate + L-lysyl-[protein]. It catalyses the reaction N(6)-(2-hydroxyisobutanoyl)-L-lysyl-[protein] + H2O = 2-hydroxy-2-methylpropanoate + L-lysyl-[protein]. The catalysed reaction is N(6)-[(S)-lactoyl]-L-lysyl-[protein] + H2O = (S)-lactate + L-lysyl-[protein]. With respect to regulation, inositol tetraphosphate (1D-myo-inositol 1,4,5,6-tetrakisphosphate) may act as an intermolecular glue between HDAC2 and N-Cor repressor complex components. Its function is as follows. Histone deacetylase that catalyzes the deacetylation of lysine residues on the N-terminal part of the core histones (H2A, H2B, H3 and H4). Histone deacetylation gives a tag for epigenetic repression and plays an important role in transcriptional regulation, cell cycle progression and developmental events. Histone deacetylases act via the formation of large multiprotein complexes. Also deacetylates non-histone proteins. In addition to protein deacetylase activity, also acts as a protein-lysine deacylase by recognizing other acyl groups: catalyzes removal of (2E)-butenoyl (crotonyl), lactoyl (lactyl) and 2-hydroxyisobutanoyl (2-hydroxyisobutyryl) acyl groups from lysine residues, leading to protein decrotonylation, delactylation and de-2-hydroxyisobutyrylation, respectively. In Gallus gallus (Chicken), this protein is Histone deacetylase 2 (HDAC2).